We begin with the raw amino-acid sequence, 429 residues long: MSSVVVVGTQWGDEGKGKITDFLSKQAEVVARYQGGDNAGHTIVFNDTKYKLHLIPSGIFYSDKTCVIGNGMVVNPKSLVTELAYLHERGVSTDNLRISNRAHIILPYHQLQDRLEEEAKGDAKVGTTLKGIGPAYMDKAARIGIRIADLLDKEVFAEKLKTVLELKNRMFVKMYEVDPIEFDDIFQEYYAYGQQFAKYVCDTSVVLNDSLDEEKKVLFEGAQGVLLDIDHGTYPFVTSSNAASGGVSSGAGIGPSKIHHVVGVCKAYTSRVGDGPFPTELDDEIGHTIREVGKEYGTTTGRPRRVGWFDSVVVRHSRRVSGITDLCLNSIDVLTGLETLKICTSYEYEGKHLDEYPPNFRVLEKCVPVYEELPGWTEDITGVRRFEDLPENAQRYVRRIEELTGIELLTFSVGPAREQTVILRDIYEA.

GTP-binding positions include 12-18 (GDEGKGK) and 40-42 (GHT). The active-site Proton acceptor is D13. Mg(2+)-binding residues include D13 and G40. IMP contacts are provided by residues 13–16 (DEGK), 38–41 (NAGH), T128, R142, Q223, T238, and R302. The Proton donor role is filled by H41. Residue 298 to 304 (TTTGRPR) coordinates substrate. GTP contacts are provided by residues R304, 330–332 (SID), and 412–414 (SVG).

The protein belongs to the adenylosuccinate synthetase family. In terms of assembly, homodimer. It depends on Mg(2+) as a cofactor.

The protein resides in the cytoplasm. The enzyme catalyses IMP + L-aspartate + GTP = N(6)-(1,2-dicarboxyethyl)-AMP + GDP + phosphate + 2 H(+). It functions in the pathway purine metabolism; AMP biosynthesis via de novo pathway; AMP from IMP: step 1/2. Its function is as follows. Plays an important role in the de novo pathway of purine nucleotide biosynthesis. Catalyzes the first committed step in the biosynthesis of AMP from IMP. The polypeptide is Adenylosuccinate synthetase (Exiguobacterium sp. (strain ATCC BAA-1283 / AT1b)).